Consider the following 243-residue polypeptide: Segregation and condensation protein A (243 aa).

The protein belongs to the ScpA family. In terms of assembly, component of a cohesin-like complex composed of ScpA, ScpB and the Smc homodimer, in which ScpA and ScpB bind to the head domain of Smc. The presence of the three proteins is required for the association of the complex with DNA.

The protein resides in the cytoplasm. Participates in chromosomal partition during cell division. May act via the formation of a condensin-like complex containing Smc and ScpB that pull DNA away from mid-cell into both cell halves. The sequence is that of Segregation and condensation protein A from Staphylococcus epidermidis (strain ATCC 35984 / DSM 28319 / BCRC 17069 / CCUG 31568 / BM 3577 / RP62A).